The primary structure comprises 242 residues: Uridylate kinase (242 aa).

An ATP-binding site is contributed by 16–19 (KVSG). Glycine 58 provides a ligand contact to UMP. Positions 59 and 63 each coordinate ATP. Residues aspartate 78 and 139–146 (TGNPFCTT) each bind UMP. ATP is bound by residues threonine 166, glutamine 167, tyrosine 172, and aspartate 175.

The protein belongs to the UMP kinase family. In terms of assembly, homohexamer.

The protein resides in the cytoplasm. It catalyses the reaction UMP + ATP = UDP + ADP. It participates in pyrimidine metabolism; CTP biosynthesis via de novo pathway; UDP from UMP (UMPK route): step 1/1. With respect to regulation, inhibited by UTP. Catalyzes the reversible phosphorylation of UMP to UDP. This is Uridylate kinase from Rickettsia prowazekii (strain Madrid E).